A 314-amino-acid polypeptide reads, in one-letter code: tRNA dimethylallyltransferase (314 aa).

12–19 (GPTASGKT) is a binding site for ATP. Position 14–19 (14–19 (TASGKT)) interacts with substrate. 2 interaction with substrate tRNA regions span residues 37 to 40 (DSAL) and 162 to 166 (QRIIR).

The protein belongs to the IPP transferase family. Monomer. Mg(2+) is required as a cofactor.

It carries out the reaction adenosine(37) in tRNA + dimethylallyl diphosphate = N(6)-dimethylallyladenosine(37) in tRNA + diphosphate. Catalyzes the transfer of a dimethylallyl group onto the adenine at position 37 in tRNAs that read codons beginning with uridine, leading to the formation of N6-(dimethylallyl)adenosine (i(6)A). This Acinetobacter baumannii (strain AB0057) protein is tRNA dimethylallyltransferase.